A 301-amino-acid polypeptide reads, in one-letter code: MDNVENCAADVFERQAAFLSSALPYMQKYENETVVVKYGGHAMGDSTLGRAFARDIALLKQSGINPVVVHGGGPQIAEILMKMGIESRFENGLRVTDERIVEVVEMVLAGSINKEIVALINAEGEWAIGLCGKDGNMVFAEKAYKTVIDPDSHIERVLDLGFVGEPVEVDRTLLDLLACSEMIPVLAPVAPGHDGKTYNINADIFAGAIAGALEAKRLLFLTDVPGVLNKKGKLLKELTISEVENLIKNGTISGGMIPKVETCMKALQNGVEGVVILNGKTPHSVLLELFTEQGAGTLIVS.

Residues 72–73, R94, and N199 each bind substrate; that span reads GG.

It belongs to the acetylglutamate kinase family. ArgB subfamily.

Its subcellular location is the cytoplasm. It carries out the reaction N-acetyl-L-glutamate + ATP = N-acetyl-L-glutamyl 5-phosphate + ADP. Its pathway is amino-acid biosynthesis; L-arginine biosynthesis; N(2)-acetyl-L-ornithine from L-glutamate: step 2/4. Functionally, catalyzes the ATP-dependent phosphorylation of N-acetyl-L-glutamate. This is Acetylglutamate kinase from Bartonella quintana (strain Toulouse) (Rochalimaea quintana).